The chain runs to 1236 residues: ESX-4 secretion system protein EccC4 (1236 aa).

Transmembrane regions (helical) follow at residues 32–52 and 59–79; these read LLPV…FLPG and PTFL…AVTG. FtsK domains follow at residues 407–607, 747–936, and 1018–1201; these read GTAV…SESR, RVPL…ADSE, and GQPV…DEGA. ATP-binding positions include 430–437, 765–772, and 1035–1042; these read GATGSGKS, GAPQTGKS, and GDNECGKT.

As to quaternary structure, part of the ESX-4 / type VII secretion system (T7SS), which is composed of cytosolic and membrane components.

The protein resides in the cell membrane. This chain is ESX-4 secretion system protein EccC4 (eccC4), found in Mycobacterium tuberculosis (strain ATCC 25618 / H37Rv).